The chain runs to 468 residues: Maltose fermentation regulatory protein MAL33 (468 aa).

Residues 8 to 34 constitute a DNA-binding region (zn(2)-C6 fungal-type); the sequence is CDYCRVRRVKCDGKKPCSRCIEHNFDC. A Nuclear localization signal motif is present at residues 41 to 49; it reads KKRGSKPIG.

It belongs to the MAL13 family.

It localises to the nucleus. Functionally, regulates the coordinate transcription of structural MAL3S (maltase) and MAL3T (maltose permease) genes. This Saccharomyces cerevisiae (strain ATCC 204508 / S288c) (Baker's yeast) protein is Maltose fermentation regulatory protein MAL33 (MAL33).